A 225-amino-acid chain; its full sequence is Uracil-DNA glycosylase (225 aa).

The active-site Proton acceptor is the D65.

The protein belongs to the uracil-DNA glycosylase (UDG) superfamily. UNG family.

It localises to the cytoplasm. It carries out the reaction Hydrolyzes single-stranded DNA or mismatched double-stranded DNA and polynucleotides, releasing free uracil.. Excises uracil residues from the DNA which can arise as a result of misincorporation of dUMP residues by DNA polymerase or due to deamination of cytosine. The sequence is that of Uracil-DNA glycosylase from Bacillus cereus (strain B4264).